Here is a 143-residue protein sequence, read N- to C-terminus: S-adenosylmethionine decarboxylase proenzyme (143 aa).

The active-site Schiff-base intermediate with substrate; via pyruvic acid is the S66. S66 is modified (pyruvic acid (Ser); by autocatalysis). H71 serves as the catalytic Proton acceptor; for processing activity. C86 (proton donor; for catalytic activity) is an active-site residue.

Belongs to the prokaryotic AdoMetDC family. Type 1 subfamily. In terms of assembly, heterotetramer of two alpha and two beta chains arranged as a dimer of alpha/beta heterodimers. Pyruvate is required as a cofactor. In terms of processing, is synthesized initially as an inactive proenzyme. Formation of the active enzyme involves a self-maturation process in which the active site pyruvoyl group is generated from an internal serine residue via an autocatalytic post-translational modification. Two non-identical subunits are generated from the proenzyme in this reaction, and the pyruvate is formed at the N-terminus of the alpha chain, which is derived from the carboxyl end of the proenzyme. The post-translation cleavage follows an unusual pathway, termed non-hydrolytic serinolysis, in which the side chain hydroxyl group of the serine supplies its oxygen atom to form the C-terminus of the beta chain, while the remainder of the serine residue undergoes an oxidative deamination to produce ammonia and the pyruvoyl group blocking the N-terminus of the alpha chain.

The catalysed reaction is S-adenosyl-L-methionine + H(+) = S-adenosyl 3-(methylsulfanyl)propylamine + CO2. The protein operates within amine and polyamine biosynthesis; S-adenosylmethioninamine biosynthesis; S-adenosylmethioninamine from S-adenosyl-L-methionine: step 1/1. In terms of biological role, catalyzes the decarboxylation of S-adenosylmethionine to S-adenosylmethioninamine (dcAdoMet), the propylamine donor required for the synthesis of the polyamines spermine and spermidine from the diamine putrescine. The polypeptide is S-adenosylmethionine decarboxylase proenzyme (Thermococcus kodakarensis (strain ATCC BAA-918 / JCM 12380 / KOD1) (Pyrococcus kodakaraensis (strain KOD1))).